The chain runs to 217 residues: MKTLRFPAGLYGITPEWDDTDRLLAAVRAAAAGGMTALQLRRKLADERLRAAQARALAPLCRELGVVFLVNDHWKLALDVGADGAHLGRDDADPATVRAQAGAGLLLGVSCYNDLRRADALLAAGADYVAFGTVFASPTKPEAVHAPLQTLTEARARVLACPAPRPAVVAIGGITPANVSQVAQAGADSAAVISGLFEAPDIQAAARACAAAFSVNP.

Residues 39 to 43 and Asn-71 contribute to the 4-amino-2-methyl-5-(diphosphooxymethyl)pyrimidine site; that span reads QLRRK. 2 residues coordinate Mg(2+): Asp-72 and Asp-91. Position 110 (Ser-110) interacts with 4-amino-2-methyl-5-(diphosphooxymethyl)pyrimidine. 137-139 contributes to the 2-[(2R,5Z)-2-carboxy-4-methylthiazol-5(2H)-ylidene]ethyl phosphate binding site; sequence SPT. Lys-140 contributes to the 4-amino-2-methyl-5-(diphosphooxymethyl)pyrimidine binding site. 2-[(2R,5Z)-2-carboxy-4-methylthiazol-5(2H)-ylidene]ethyl phosphate is bound by residues Gly-173 and 193–194; that span reads IS.

It belongs to the thiamine-phosphate synthase family. It depends on Mg(2+) as a cofactor.

It catalyses the reaction 2-[(2R,5Z)-2-carboxy-4-methylthiazol-5(2H)-ylidene]ethyl phosphate + 4-amino-2-methyl-5-(diphosphooxymethyl)pyrimidine + 2 H(+) = thiamine phosphate + CO2 + diphosphate. The enzyme catalyses 2-(2-carboxy-4-methylthiazol-5-yl)ethyl phosphate + 4-amino-2-methyl-5-(diphosphooxymethyl)pyrimidine + 2 H(+) = thiamine phosphate + CO2 + diphosphate. The catalysed reaction is 4-methyl-5-(2-phosphooxyethyl)-thiazole + 4-amino-2-methyl-5-(diphosphooxymethyl)pyrimidine + H(+) = thiamine phosphate + diphosphate. Its pathway is cofactor biosynthesis; thiamine diphosphate biosynthesis; thiamine phosphate from 4-amino-2-methyl-5-diphosphomethylpyrimidine and 4-methyl-5-(2-phosphoethyl)-thiazole: step 1/1. In terms of biological role, condenses 4-methyl-5-(beta-hydroxyethyl)thiazole monophosphate (THZ-P) and 2-methyl-4-amino-5-hydroxymethyl pyrimidine pyrophosphate (HMP-PP) to form thiamine monophosphate (TMP). In Bordetella parapertussis (strain 12822 / ATCC BAA-587 / NCTC 13253), this protein is Thiamine-phosphate synthase.